A 127-amino-acid polypeptide reads, in one-letter code: Protein chibby homolog 1 (127 aa).

Residues 1–25 (MPLFGSIFSPKKTPPRKSASLSNLH) are disordered. 2 positions are modified to phosphoserine: Ser9 and Ser20. A minimal region for the interaction with PKD2 region spans residues 60 to 112 (VADSVISGGVDRRETQRLRKRNQQLEEENNLLRLKVDILLDMLSETTAESHLK). Positions 68–110 (GVDRRETQRLRKRNQQLEEENNLLRLKVDILLDMLSETTAESH) form a coiled coil. The segment at 77 to 98 (LRKRNQQLEEENNLLRLKVDIL) is leucine-zipper; mediates homodimerization.

It belongs to the chibby family. In terms of assembly, homodimer. Homodimerization is essential for nuclear localization and interaction with KPNA4 but is dispensable for interaction with CTNNB1. Interacts with polycystin-2/PKD2 and GM130. Interacts with the C-terminal region of CTNNB1. Interacts (C-terminus) with TCIM (C-terminus), TCIM competes with CTNNB1 for the interaction with CBY1. Interacts with FAM92A; this interaction facilitates targeting of FAM92A to cilium basal body. Interacts with CIBAR2. Interacts with KPNA4. Found in heart, brain, lung, liver, muscle, kidney and testis. Levels are approximately 3-fold higher in embryonic and adult heart than in lung or liver.

Its subcellular location is the nucleus speckle. The protein localises to the cytoplasm. It is found in the cytoskeleton. The protein resides in the cilium basal body. It localises to the microtubule organizing center. Its subcellular location is the centrosome. The protein localises to the centriole. It is found in the golgi apparatus. The protein resides in the trans-Golgi network. It localises to the cell projection. Its subcellular location is the cilium. The protein localises to the flagellum. It is found in the nucleus. Functionally, inhibits the Wnt/Wingless pathway by binding to CTNNB1/beta-catenin and inhibiting beta-catenin-mediated transcriptional activation through competition with TCF/LEF transcription factors. Has also been shown to play a role in regulating the intracellular trafficking of polycystin-2/PKD2 and possibly of other intracellular proteins. Promotes adipocyte and cardiomyocyte differentiation. The protein is Protein chibby homolog 1 (Cby1) of Mus musculus (Mouse).